We begin with the raw amino-acid sequence, 538 residues long: Beta-1-syntrophin (538 aa).

Position 2 is an N-acetylalanine (alanine 2). PH domains follow at residues 19–298 (RAQR…SNVN) and 322–433 (EIRH…QGCH). Residues serine 87, serine 126, and serine 205 each carry the phosphoserine modification. The region spanning 112-195 (GVKVLKQELG…EVLLEVKYMR (84 aa)) is the PDZ domain. The segment at 205 to 237 (SPVSEIGWETPPPESPRLGGSTSDPPSSQSFSF) is disordered. Phosphothreonine is present on threonine 214. Serine 219, serine 232, serine 236, and serine 389 each carry phosphoserine. Residues 225-236 (STSDPPSSQSFS) show a composition bias toward low complexity. The region spanning 482-538 (PYEKLKMSSDDGIRMLYLDFGGKDGEIQLDLHSCPKPIVFIIHSFLSAKITRLGLVA) is the SU domain. Residues 518-538 (PIVFIIHSFLSAKITRLGLVA) form a calmodulin-binding region.

The protein belongs to the syntrophin family. As to quaternary structure, monomer and homodimer. Interacts with the other members of the syntrophin family SNTA1 and SNTB2; with the sodium channel proteins SCN4A and SCN5A. Interacts with the viral HTLV-1 TAX protein and with dystrophin protein DMD and related proteins DTNA and UTRN. Interacts with DTNB. Post-translationally, phosphorylated by CaM-kinase II. Ubiquitous.

The protein resides in the cell membrane. It localises to the sarcolemma. It is found in the cell junction. Its subcellular location is the cytoplasm. The protein localises to the cytoskeleton. In terms of biological role, adapter protein that binds to and probably organizes the subcellular localization of a variety of membrane proteins. May link various receptors to the actin cytoskeleton and the dystrophin glycoprotein complex. This chain is Beta-1-syntrophin (SNTB1), found in Homo sapiens (Human).